The following is a 214-amino-acid chain: Cell division protein B1 (214 aa).

Functionally, part of a cell division machinery. This chain is Cell division protein B1, found in Sulfolobus acidocaldarius (strain ATCC 33909 / DSM 639 / JCM 8929 / NBRC 15157 / NCIMB 11770).